We begin with the raw amino-acid sequence, 502 residues long: Medium/long-chain-fatty-acid--CoA ligase FadD17 (502 aa).

The protein belongs to the ATP-dependent AMP-binding enzyme family.

It carries out the reaction a medium-chain fatty acid + ATP + CoA = a medium-chain fatty acyl-CoA + AMP + diphosphate. It catalyses the reaction a long-chain fatty acid + ATP + CoA = a long-chain fatty acyl-CoA + AMP + diphosphate. It functions in the pathway lipid metabolism; fatty acid biosynthesis. Catalyzes the activation of medium/long-chain fatty acids as acyl-coenzyme A (acyl-CoA), which are then transferred to the multifunctional polyketide synthase (PKS) type III for further chain extension. The protein is Medium/long-chain-fatty-acid--CoA ligase FadD17 (fadD17) of Mycobacterium bovis (strain ATCC BAA-935 / AF2122/97).